The following is a 71-amino-acid chain: uncharacterized protein (71 aa).

Positions 1-16 (MAKSQAKKKRGHRLRN) are enriched in basic residues. Disordered stretches follow at residues 1–39 (MAKS…RMTK) and 51–71 (KNPY…QKAA). The span at 25–35 (RGSTPSFSTHG) shows a compositional bias: polar residues. Positions 51–64 (KNPYDHTAVDDKDF) are enriched in basic and acidic residues.

This is an uncharacterized protein from Bacillus subtilis (strain 168).